We begin with the raw amino-acid sequence, 177 residues long: Transcription termination/antitermination protein NusG (177 aa).

The KOW domain maps to 126–156 (PGETVRVIDGPFADFNGVVEEVNYEKSRIQV).

Belongs to the NusG family.

Participates in transcription elongation, termination and antitermination. The protein is Transcription termination/antitermination protein NusG of Pseudomonas aeruginosa (strain ATCC 15692 / DSM 22644 / CIP 104116 / JCM 14847 / LMG 12228 / 1C / PRS 101 / PAO1).